Consider the following 200-residue polypeptide: Probable GTP-binding protein EngB (200 aa).

Residues 22 to 195 enclose the EngB-type G domain; sequence GKDEIAFVGR…INNICSGINY (174 aa). GTP-binding positions include 30 to 37, 57 to 61, 75 to 78, 142 to 145, and 174 to 176; these read GRSNVGKS, GKTRL, DLPG, TKSD, and FSS. Residues Ser37 and Thr59 each contribute to the Mg(2+) site.

The protein belongs to the TRAFAC class TrmE-Era-EngA-EngB-Septin-like GTPase superfamily. EngB GTPase family. Mg(2+) serves as cofactor.

In terms of biological role, necessary for normal cell division and for the maintenance of normal septation. The sequence is that of Probable GTP-binding protein EngB from Clostridium acetobutylicum (strain ATCC 824 / DSM 792 / JCM 1419 / IAM 19013 / LMG 5710 / NBRC 13948 / NRRL B-527 / VKM B-1787 / 2291 / W).